A 120-amino-acid polypeptide reads, in one-letter code: NAD(P)H-quinone oxidoreductase subunit 3, chloroplastic (120 aa).

Helical transmembrane passes span 10–30 (FWVFLIISSLIPILAFLISGV), 64–84 (IFALVFVVFDVETVFLYPWAM), and 88–108 (VLGVSVFIEALVFVLILIVGS).

It belongs to the complex I subunit 3 family. NDH is composed of at least 16 different subunits, 5 of which are encoded in the nucleus.

The protein localises to the plastid. The protein resides in the chloroplast thylakoid membrane. It catalyses the reaction a plastoquinone + NADH + (n+1) H(+)(in) = a plastoquinol + NAD(+) + n H(+)(out). The catalysed reaction is a plastoquinone + NADPH + (n+1) H(+)(in) = a plastoquinol + NADP(+) + n H(+)(out). NDH shuttles electrons from NAD(P)H:plastoquinone, via FMN and iron-sulfur (Fe-S) centers, to quinones in the photosynthetic chain and possibly in a chloroplast respiratory chain. The immediate electron acceptor for the enzyme in this species is believed to be plastoquinone. Couples the redox reaction to proton translocation, and thus conserves the redox energy in a proton gradient. This is NAD(P)H-quinone oxidoreductase subunit 3, chloroplastic from Pelargonium hortorum (Common geranium).